A 406-amino-acid polypeptide reads, in one-letter code: uncharacterized protein (406 aa).

Belongs to the mycobacterial PPE family.

This is an uncharacterized protein from Mycobacterium tuberculosis (strain CDC 1551 / Oshkosh).